Consider the following 491-residue polypeptide: Aspartyl/glutamyl-tRNA(Asn/Gln) amidotransferase subunit B (491 aa).

This sequence belongs to the GatB/GatE family. GatB subfamily. In terms of assembly, heterotrimer of A, B and C subunits.

It carries out the reaction L-glutamyl-tRNA(Gln) + L-glutamine + ATP + H2O = L-glutaminyl-tRNA(Gln) + L-glutamate + ADP + phosphate + H(+). The catalysed reaction is L-aspartyl-tRNA(Asn) + L-glutamine + ATP + H2O = L-asparaginyl-tRNA(Asn) + L-glutamate + ADP + phosphate + 2 H(+). Its function is as follows. Allows the formation of correctly charged Asn-tRNA(Asn) or Gln-tRNA(Gln) through the transamidation of misacylated Asp-tRNA(Asn) or Glu-tRNA(Gln) in organisms which lack either or both of asparaginyl-tRNA or glutaminyl-tRNA synthetases. The reaction takes place in the presence of glutamine and ATP through an activated phospho-Asp-tRNA(Asn) or phospho-Glu-tRNA(Gln). This Nostoc punctiforme (strain ATCC 29133 / PCC 73102) protein is Aspartyl/glutamyl-tRNA(Asn/Gln) amidotransferase subunit B.